A 49-amino-acid polypeptide reads, in one-letter code: Large ribosomal subunit protein bL33 (49 aa).

The protein belongs to the bacterial ribosomal protein bL33 family.

This chain is Large ribosomal subunit protein bL33, found in Clostridioides difficile (strain 630) (Peptoclostridium difficile).